We begin with the raw amino-acid sequence, 648 residues long: DNA mismatch repair protein MutL (648 aa).

A disordered region spans residues 336–443; it reads ERPFEPSSPQ…SGSAGESRAR (108 aa). Over residues 370–381 the composition is skewed to polar residues; the sequence is SPESKTHSTWNE. The span at 383–410 shows a compositional bias: basic and acidic residues; the sequence is SRVDTSRAETSRESRIDSPLGERTRDIA.

It belongs to the DNA mismatch repair MutL/HexB family.

This protein is involved in the repair of mismatches in DNA. It is required for dam-dependent methyl-directed DNA mismatch repair. May act as a 'molecular matchmaker', a protein that promotes the formation of a stable complex between two or more DNA-binding proteins in an ATP-dependent manner without itself being part of a final effector complex. The polypeptide is DNA mismatch repair protein MutL (Shewanella sp. (strain ANA-3)).